A 291-amino-acid chain; its full sequence is Undecaprenyl-diphosphatase (291 aa).

8 helical membrane-spanning segments follow: residues 1 to 21 (MFIIELIKGIILGVVEGLTEF), 48 to 68 (SAFTFKIVIQLGSVFAAAWVF), 102 to 122 (LHVLVGMVPAGILGLLFDDFI), 126 to 146 (LFSVPTVMIGLFVGAIYMIIA), 162 to 182 (INYFQAFVIGISQAVAMWPGF), 203 to 223 (SDFTFIMAVPIMLAASGLSLL), 231 to 251 (IADIPFYILGFLAAFTVGLIA), and 267 to 287 (FAIYRIVLVIFIAILYFGFGI).

The protein belongs to the UppP family.

It is found in the cell membrane. The catalysed reaction is di-trans,octa-cis-undecaprenyl diphosphate + H2O = di-trans,octa-cis-undecaprenyl phosphate + phosphate + H(+). Catalyzes the dephosphorylation of undecaprenyl diphosphate (UPP). Confers resistance to bacitracin. This is Undecaprenyl-diphosphatase from Staphylococcus aureus (strain Mu3 / ATCC 700698).